Reading from the N-terminus, the 105-residue chain is Large ribosomal subunit protein uL24 (105 aa).

Basic and acidic residues predominate over residues 77–93 (DGKPTRVGYRKDDETGK). Positions 77–105 (DGKPTRVGYRKDDETGKNVRIAKSNGKDL) are disordered.

It belongs to the universal ribosomal protein uL24 family. In terms of assembly, part of the 50S ribosomal subunit.

Functionally, one of two assembly initiator proteins, it binds directly to the 5'-end of the 23S rRNA, where it nucleates assembly of the 50S subunit. In terms of biological role, one of the proteins that surrounds the polypeptide exit tunnel on the outside of the subunit. This chain is Large ribosomal subunit protein uL24, found in Mycolicibacterium gilvum (strain PYR-GCK) (Mycobacterium gilvum (strain PYR-GCK)).